A 275-amino-acid polypeptide reads, in one-letter code: Shikimate dehydrogenase (NADP(+)) (275 aa).

Residues 19–21 (SIS) and Thr-66 contribute to the shikimate site. Lys-70 (proton acceptor) is an active-site residue. Shikimate contacts are provided by Asn-91 and Asp-106. Residues 129–133 (GAGGA), 153–158 (NRTYGR), and Ile-219 each bind NADP(+). Residue Tyr-221 coordinates shikimate. Gly-242 contacts NADP(+).

Belongs to the shikimate dehydrogenase family. Homodimer.

It catalyses the reaction shikimate + NADP(+) = 3-dehydroshikimate + NADPH + H(+). It participates in metabolic intermediate biosynthesis; chorismate biosynthesis; chorismate from D-erythrose 4-phosphate and phosphoenolpyruvate: step 4/7. In terms of biological role, involved in the biosynthesis of the chorismate, which leads to the biosynthesis of aromatic amino acids. Catalyzes the reversible NADPH linked reduction of 3-dehydroshikimate (DHSA) to yield shikimate (SA). The protein is Shikimate dehydrogenase (NADP(+)) of Dictyoglomus thermophilum (strain ATCC 35947 / DSM 3960 / H-6-12).